Reading from the N-terminus, the 1361-residue chain is Rho guanine nucleotide exchange factor 18 (1361 aa).

3 disordered regions span residues 33-88 (LQDL…SCSE), 131-156 (SGGGTPAESPGKECDSPKKRGRSRSV), and 244-292 (DGAG…ARER). The segment covering 50–61 (PDSRPTGEEPGR) has biased composition (basic and acidic residues). A compositionally biased stretch (polar residues) spans 64 to 73 (LFSSLAGSQD). The segment covering 74–88 (LSRRRSWERSRSCSE) has biased composition (basic and acidic residues). 2 stretches are compositionally biased toward basic and acidic residues: residues 245–256 (GAGKNEKSDKST) and 271–292 (RQKEKGKSPAHLKDKGQDARER). The C2H2-type; degenerate zinc-finger motif lies at 310–334 (SSCPLCGKPFLSSASLKEHPRGTLL). Residues 348 to 368 (TVSQKGGPQPTPSPAGPGTQL) are disordered. The DH domain occupies 447 to 644 (KRQDVLYELM…KDIISQVDAK (198 aa)). The PH domain occupies 684-786 (QLHLEGMLCW…WMAHIQRAVE (103 aa)). Disordered stretches follow at residues 893–980 (ANGQ…DPRL), 1143–1211 (LKKQ…RLAK), 1229–1264 (AAVQQQIPTKLAASTKGGKDKGGKSRGSQRWESSAS), and 1277–1361 (MGKD…VIFF). The residue at position 912 (Thr912) is a Phosphothreonine. Ser921 is subject to Phosphoserine. Positions 1038 to 1148 (LEQERQRNFE…LLRRLKKQNT (111 aa)) form a coiled coil. A compositionally biased stretch (basic and acidic residues) spans 1191-1211 (YAERPEVARRDSAPTENRLAK). The span at 1254–1264 (RGSQRWESSAS) shows a compositional bias: polar residues. Phosphoserine occurs at positions 1289 and 1291. Pro residues-rich tracts occupy residues 1300–1317 (PAPPPDPGFPAPSPPPAD) and 1334–1344 (PGPPAPSPLPA). The span at 1349-1361 (AKEDASKEDVIFF) shows a compositional bias: basic and acidic residues.

Interacts with SEPT9; the interaction may inhibit GEF activity. Interacts with Gbetagamma subunits GNB1 and GNG2. Interacts with EPB41L4B. Interacts with PATJ (via C-terminus). Expressed in all tissues tested with highest expression in kidney and pancreas. Weakly or not expressed in liver, skeletal muscle and testis. Isoform 1: Expressed in eosinophils. Isoform 2: Expressed in eosinophils. Isoform 3: Expressed in eosinophils. Isoform 4: Not detected in eosinophils.

The protein localises to the cytoplasm. The protein resides in the cytoskeleton. Its subcellular location is the cell membrane. It localises to the apical cell membrane. Its function is as follows. Acts as a guanine nucleotide exchange factor (GEF) for RhoA GTPases. Its activation induces formation of actin stress fibers. Also acts as a GEF for RAC1, inducing production of reactive oxygen species (ROS). Does not act as a GEF for CDC42. The G protein beta-gamma (Gbetagamma) subunits of heterotrimeric G proteins act as activators, explaining the integrated effects of LPA and other G-protein coupled receptor agonists on actin stress fiber formation, cell shape change and ROS production. Required for EPB41L4B-mediated regulation of the circumferential actomyosin belt in epithelial cells. The protein is Rho guanine nucleotide exchange factor 18 (ARHGEF18) of Homo sapiens (Human).